The following is a 465-amino-acid chain: Gamma-aminobutyric acid receptor subunit gamma-1 (465 aa).

Positions methionine 1–glycine 20 are cleaved as a signal peptide. The Extracellular portion of the chain corresponds to valine 21 to phenylalanine 273. N-linked (GlcNAc...) asparagine glycans are attached at residues asparagine 50 and asparagine 127. A disulfide bond links cysteine 188 and cysteine 202. Asparagine 245 carries N-linked (GlcNAc...) asparagine glycosylation. A helical transmembrane segment spans residues threonine 274–isoleucine 294. The Cytoplasmic portion of the chain corresponds to asparagine 295–proline 300. A helical transmembrane segment spans residues alanine 301 to alanine 320. At arginine 321–serine 328 the chain is on the extracellular side. Residues tyrosine 329–methionine 349 form a helical membrane-spanning segment. The Cytoplasmic portion of the chain corresponds to glutamate 350–arginine 444. The helical transmembrane segment at isoleucine 445–leucine 465 threads the bilayer.

The protein belongs to the ligand-gated ion channel (TC 1.A.9) family. Gamma-aminobutyric acid receptor (TC 1.A.9.5) subfamily. GABRG1 sub-subfamily. Heteropentamer, formed by a combination of alpha (GABRA1-6), beta (GABRB1-3), gamma (GABRG1-3), delta (GABRD), epsilon (GABRE), rho (GABRR1-3), pi (GABRP) and theta (GABRQ) chains, each subunit exhibiting distinct physiological and pharmacological properties. Post-translationally, may be palmitoylated. In terms of tissue distribution, expressed in brain.

The protein resides in the postsynaptic cell membrane. It is found in the cell membrane. The catalysed reaction is chloride(in) = chloride(out). In terms of biological role, gamma subunit of the heteropentameric ligand-gated chloride channel gated by gamma-aminobutyric acid (GABA), a major inhibitory neurotransmitter in the brain. GABA-gated chloride channels, also named GABA(A) receptors (GABAAR), consist of five subunits arranged around a central pore and contain GABA active binding site(s) located at the alpha and beta subunit interface(s). When activated by GABA, GABAARs selectively allow the flow of chloride anions across the cell membrane down their electrochemical gradient. Chloride influx into the postsynaptic neuron following GABAAR opening decreases the neuron ability to generate a new action potential, thereby reducing nerve transmission. The sequence is that of Gamma-aminobutyric acid receptor subunit gamma-1 from Rattus norvegicus (Rat).